Consider the following 408-residue polypeptide: Argininosuccinate synthase (408 aa).

ATP-binding positions include 11 to 19 (AYSGGLDTS) and A38. L-citrulline-binding residues include Y91 and S96. G121 is a binding site for ATP. L-aspartate-binding residues include T123, N127, and D128. Residue N127 participates in L-citrulline binding. Residues R131, S182, S191, E267, and Y279 each contribute to the L-citrulline site.

Belongs to the argininosuccinate synthase family. Type 1 subfamily. In terms of assembly, homotetramer.

Its subcellular location is the cytoplasm. It carries out the reaction L-citrulline + L-aspartate + ATP = 2-(N(omega)-L-arginino)succinate + AMP + diphosphate + H(+). Its pathway is amino-acid biosynthesis; L-arginine biosynthesis; L-arginine from L-ornithine and carbamoyl phosphate: step 2/3. This chain is Argininosuccinate synthase, found in Zymomonas mobilis subsp. mobilis (strain ATCC 31821 / ZM4 / CP4).